We begin with the raw amino-acid sequence, 101 residues long: Conantokin-L (101 aa).

A signal peptide spans 1 to 21; that stretch reads MQLYTYLYLLVPLVTFHLILG. The propeptide occupies 22 to 80; sequence TGTLDHGGALTERRSTDAIALKPEPVLLQKSSARSTDDNGNDRLTQMKRILKKRGNKAR. Residues Glu-83, Glu-84, Glu-91, and Glu-95 each carry the 4-carboxyglutamate modification. Positions 91 and 95 each coordinate a divalent metal cation. The residue at position 99 (Asn-99) is an Asparagine amide.

This sequence belongs to the conotoxin B superfamily. Ca(2+) serves as cofactor. Mg(2+) is required as a cofactor. As to expression, expressed by the venom duct.

The protein resides in the secreted. In terms of biological role, conantokins inhibit N-methyl-D-aspartate (NMDA) receptors. This toxin is far less potent as an anticonvulsant compound than conantokin-R. It induces sleep-like symptoms in mice. In Conus lynceus (Lynceus cone), this protein is Conantokin-L.